A 638-amino-acid chain; its full sequence is Chaperone protein DnaK (638 aa).

T197 is modified (phosphothreonine; by autocatalysis). The tract at residues 598–638 (QQSAPSGAAAGPDEGAPSGSGGTSGTRGGDDVIDAEFTETK) is disordered. Over residues 615–624 (SGSGGTSGTR) the composition is skewed to gly residues. The span at 628-638 (DVIDAEFTETK) shows a compositional bias: acidic residues.

Belongs to the heat shock protein 70 family.

In terms of biological role, acts as a chaperone. This is Chaperone protein DnaK from Gloeobacter violaceus (strain ATCC 29082 / PCC 7421).